The chain runs to 220 residues: Flavin-dependent thymidylate synthase (220 aa).

The region spanning 1–208 is the ThyX domain; it reads MKIDILDKGF…PWTFEAFLKY (208 aa). FAD contacts are provided by residues T55, 78-81, and E86; that span reads RHRI. DUMP is bound by residues 75–78, 86–90, and R147; these read QWFR and ELSGR. Residues 78 to 88 carry the ThyX motif motif; that stretch reads RHRIASYNELS. FAD-binding positions include 163–165 and N169; that span reads NAR. DUMP is bound at residue R174. R174 (involved in ionization of N3 of dUMP, leading to its activation) is an active-site residue.

The protein belongs to the thymidylate synthase ThyX family. Homotetramer. Requires FAD as cofactor.

The catalysed reaction is dUMP + (6R)-5,10-methylene-5,6,7,8-tetrahydrofolate + NADPH + H(+) = dTMP + (6S)-5,6,7,8-tetrahydrofolate + NADP(+). It carries out the reaction dUMP + formaldehyde + NADPH + H(+) = dTMP + NADP(+) + H2O. It functions in the pathway pyrimidine metabolism; dTTP biosynthesis. Functionally, catalyzes the reductive methylation of 2'-deoxyuridine-5'-monophosphate (dUMP or deoxyuridylate) to 2'-deoxythymidine-5'-monophosphate (dTMP or deoxythymidylate) while utilizing 5,10-methylenetetrahydrofolate (mTHF) as the methylene donor, and NAD(P)H and FADH(2) as the reductant. This reaction is a critical step in DNA biosynthesis. Can also use formaldehyde instead of mTHF as a direct methylene donor for dTMP synthesis. However, the tighter binding of ThyX to mTHF (KD of 4 uM) compared to formaldehyde (KD of 20 mM) confirms that methylene tetrahydrofolate acts as the biological carbon donor for ThyX, serving as a formaldehyde carrier/transporter and thus avoiding genotoxic effects. The polypeptide is Flavin-dependent thymidylate synthase (Thermotoga maritima (strain ATCC 43589 / DSM 3109 / JCM 10099 / NBRC 100826 / MSB8)).